The following is a 174-amino-acid chain: MTYVLFLLSVGLVMGFVGFSSKPSPIYGGLVLIVSGVVGCAIILNCGGGYMGLMVFLIYLGGMMVVFGYTTAMAIGEYPEAWGSGVEVLVSVLVGLAMEVGLVLWVKEYDGVVVVVNFNNVGSWMIYEGEGSGLIREDPIGAGALYDYGRWLVVVTGWTLFVGVYIVIEIARGN.

A run of 5 helical transmembrane segments spans residues M1–S21, S24–L44, G47–F67, V86–V106, and W151–A171.

The protein belongs to the complex I subunit 6 family. In terms of assembly, core subunit of respiratory chain NADH dehydrogenase (Complex I) which is composed of 45 different subunits.

The protein localises to the mitochondrion inner membrane. The enzyme catalyses a ubiquinone + NADH + 5 H(+)(in) = a ubiquinol + NAD(+) + 4 H(+)(out). In terms of biological role, core subunit of the mitochondrial membrane respiratory chain NADH dehydrogenase (Complex I) which catalyzes electron transfer from NADH through the respiratory chain, using ubiquinone as an electron acceptor. Essential for the catalytic activity and assembly of complex I. The protein is NADH-ubiquinone oxidoreductase chain 6 (MT-ND6) of Gorilla gorilla gorilla (Western lowland gorilla).